The primary structure comprises 700 residues: Elongation factor G (700 aa).

The tr-type G domain occupies 8-290; that stretch reads DRYRNVGIMA…AMIMYMPSPL (283 aa). GTP-binding positions include 17–24, 88–92, and 142–145; these read AHIDAGKT, DTPGH, and NKMD.

The protein belongs to the TRAFAC class translation factor GTPase superfamily. Classic translation factor GTPase family. EF-G/EF-2 subfamily.

It localises to the cytoplasm. Its function is as follows. Catalyzes the GTP-dependent ribosomal translocation step during translation elongation. During this step, the ribosome changes from the pre-translocational (PRE) to the post-translocational (POST) state as the newly formed A-site-bound peptidyl-tRNA and P-site-bound deacylated tRNA move to the P and E sites, respectively. Catalyzes the coordinated movement of the two tRNA molecules, the mRNA and conformational changes in the ribosome. This is Elongation factor G from Vesicomyosocius okutanii subsp. Calyptogena okutanii (strain HA).